Reading from the N-terminus, the 598-residue chain is Elongation factor 4 (598 aa).

One can recognise a tr-type G domain in the interval K4–Q181. Residues D16–T21 and N128–D131 each bind GTP.

This sequence belongs to the TRAFAC class translation factor GTPase superfamily. Classic translation factor GTPase family. LepA subfamily.

It is found in the cell membrane. The catalysed reaction is GTP + H2O = GDP + phosphate + H(+). Required for accurate and efficient protein synthesis under certain stress conditions. May act as a fidelity factor of the translation reaction, by catalyzing a one-codon backward translocation of tRNAs on improperly translocated ribosomes. Back-translocation proceeds from a post-translocation (POST) complex to a pre-translocation (PRE) complex, thus giving elongation factor G a second chance to translocate the tRNAs correctly. Binds to ribosomes in a GTP-dependent manner. The polypeptide is Elongation factor 4 (Mesomycoplasma hyopneumoniae (strain J / ATCC 25934 / NCTC 10110) (Mycoplasma hyopneumoniae)).